A 263-amino-acid chain; its full sequence is 3-methyl-2-oxobutanoate hydroxymethyltransferase (263 aa).

Mg(2+)-binding residues include Asp43 and Asp82. 3-methyl-2-oxobutanoate is bound by residues 43-44, Asp82, and Lys111; that span reads DS. Position 113 (Glu113) interacts with Mg(2+). Glu179 serves as the catalytic Proton acceptor.

Belongs to the PanB family. As to quaternary structure, homodecamer; pentamer of dimers. It depends on Mg(2+) as a cofactor.

The protein localises to the cytoplasm. The enzyme catalyses 3-methyl-2-oxobutanoate + (6R)-5,10-methylene-5,6,7,8-tetrahydrofolate + H2O = 2-dehydropantoate + (6S)-5,6,7,8-tetrahydrofolate. The protein operates within cofactor biosynthesis; (R)-pantothenate biosynthesis; (R)-pantoate from 3-methyl-2-oxobutanoate: step 1/2. Catalyzes the reversible reaction in which hydroxymethyl group from 5,10-methylenetetrahydrofolate is transferred onto alpha-ketoisovalerate to form ketopantoate. The polypeptide is 3-methyl-2-oxobutanoate hydroxymethyltransferase (Neisseria gonorrhoeae (strain ATCC 700825 / FA 1090)).